We begin with the raw amino-acid sequence, 260 residues long: tRNA (guanine-N(1)-)-methyltransferase (260 aa).

Residues glycine 117 and 137-142 (LGDFVL) each bind S-adenosyl-L-methionine.

Belongs to the RNA methyltransferase TrmD family. In terms of assembly, homodimer.

Its subcellular location is the cytoplasm. It carries out the reaction guanosine(37) in tRNA + S-adenosyl-L-methionine = N(1)-methylguanosine(37) in tRNA + S-adenosyl-L-homocysteine + H(+). Functionally, specifically methylates guanosine-37 in various tRNAs. The polypeptide is tRNA (guanine-N(1)-)-methyltransferase (Cupriavidus metallidurans (strain ATCC 43123 / DSM 2839 / NBRC 102507 / CH34) (Ralstonia metallidurans)).